The sequence spans 156 residues: Transcription elongation factor GreA (156 aa).

Residues 1 to 84 (MAKYTISKHR…IEDVMRSTDE (84 aa)) adopt a coiled-coil conformation.

Belongs to the GreA/GreB family.

Functionally, necessary for efficient RNA polymerase transcription elongation past template-encoded arresting sites. The arresting sites in DNA have the property of trapping a certain fraction of elongating RNA polymerases that pass through, resulting in locked ternary complexes. Cleavage of the nascent transcript by cleavage factors such as GreA or GreB allows the resumption of elongation from the new 3'terminus. GreA releases sequences of 2 to 3 nucleotides. The chain is Transcription elongation factor GreA from Ureaplasma urealyticum serovar 10 (strain ATCC 33699 / Western).